The sequence spans 293 residues: Signal recognition particle receptor FtsY (293 aa).

Residues 93–100 (GVNGAGKT), 175–179 (DTAGR), and 239–242 (TKLD) contribute to the GTP site.

It belongs to the GTP-binding SRP family. FtsY subfamily. Part of the signal recognition particle protein translocation system, which is composed of SRP and FtsY. SRP is a ribonucleoprotein composed of Ffh and a 4.5S RNA molecule.

The protein localises to the cell inner membrane. The protein resides in the cytoplasm. The catalysed reaction is GTP + H2O = GDP + phosphate + H(+). Its function is as follows. Involved in targeting and insertion of nascent membrane proteins into the cytoplasmic membrane. Acts as a receptor for the complex formed by the signal recognition particle (SRP) and the ribosome-nascent chain (RNC). Interaction with SRP-RNC leads to the transfer of the RNC complex to the Sec translocase for insertion into the membrane, the hydrolysis of GTP by both Ffh and FtsY, and the dissociation of the SRP-FtsY complex into the individual components. This chain is Signal recognition particle receptor FtsY, found in Helicobacter pylori (strain J99 / ATCC 700824) (Campylobacter pylori J99).